Consider the following 357-residue polypeptide: Mitochondrial carrier protein LEU5 (357 aa).

Transmembrane regions (helical) follow at residues 31–47 (DYIV…GSCA), 103–119 (LRIF…YEQI), 136–153 (LVSG…TYPL), 208–228 (VPTV…HDLL), 269–285 (ISGG…AYPF), and 325–347 (GFFV…SFFV). 3 Solcar repeats span residues 31 to 122 (DYIV…IRNT), 130 to 231 (ESHW…LHDV), and 262 to 354 (LRTW…MKWN).

It belongs to the mitochondrial carrier (TC 2.A.29) family.

Its subcellular location is the mitochondrion inner membrane. Required for the accumulation of coenzyme A in the mitochondrial matrix. The protein is Mitochondrial carrier protein LEU5 (LEU5) of Saccharomyces cerevisiae (strain ATCC 204508 / S288c) (Baker's yeast).